Reading from the N-terminus, the 352-residue chain is MALTVDVAGPAPWGFRITGGRDFHTPIMVTKVAERGKAKDADLRPGDIIVAINGESAEGMLHAEAQSKIRQSPSPLRLQLDRSQATSPGQTNGDSSLEVLATRFQGSVRTYTESQSSLRSSYSSPTSLSPRAGSPFSPPPSSSSLTGEAAISRSFQSLACSPGLPAADRLSYSGRPGSRQAGLGRAGDSAVLVLPPSPGPRSSRPSMDSEGGSLLLDEDSEVFKMLQENREGRAAPRQSSSFRLLQEALEAEERGGTPAFLPSSLSPQSSLPASRALATPPKLHTCEKCSTSIANQAVRIQEGRYRHPGCYTCADCGLNLKMRGHFWVGDELYCEKHARQRYSAPATLSSRA.

In terms of domain architecture, PDZ spans 1 to 84 (MALTVDVAGP…PLRLQLDRSQ (84 aa)). Disordered regions lie at residues 67 to 97 (SKIR…DSSL) and 111 to 149 (YTES…TGEA). Over residues 81 to 95 (DRSQATSPGQTNGDS) the composition is skewed to polar residues. The span at 111 to 135 (YTESQSSLRSSYSSPTSLSPRAGSP) shows a compositional bias: low complexity. Position 124 is a phosphoserine (Ser124). Thr126 is modified (phosphothreonine). Residues Ser127, Ser129, Ser134, Ser137, Ser143, Ser161, Ser197, Ser203, Ser213, and Ser266 each carry the phosphoserine modification. Residues 170-213 (LSYSGRPGSRQAGLGRAGDSAVLVLPPSPGPRSSRPSMDSEGGS) form a disordered region. The region spanning 284 to 344 (HTCEKCSTSI…EKHARQRYSA (61 aa)) is the LIM zinc-binding domain.

Interacts with alpha-actinins ACTN1 and ACTN4, FLNA and MYH9. Interacts (via LIM zinc-binding domain) with MKRN2.

It localises to the cytoplasm. The protein localises to the nucleus. The protein resides in the cytoskeleton. In terms of biological role, probable adapter protein located at the actin cytoskeleton that promotes cell attachment. Necessary for the migratory capacity of epithelial cells. Overexpression enhances cell adhesion to collagen and fibronectin and suppresses anchorage independent growth. May contribute to tumor cell migratory capacity. This Homo sapiens (Human) protein is PDZ and LIM domain protein 2 (PDLIM2).